The sequence spans 258 residues: Ubiquinone/menaquinone biosynthesis C-methyltransferase UbiE (258 aa).

The segment at 1-20 (MSESRTSADGGMETSYGFRE) is disordered. Residues Thr81, Asp102, and 130 to 131 (NA) contribute to the S-adenosyl-L-methionine site.

Belongs to the class I-like SAM-binding methyltransferase superfamily. MenG/UbiE family.

It catalyses the reaction a 2-demethylmenaquinol + S-adenosyl-L-methionine = a menaquinol + S-adenosyl-L-homocysteine + H(+). The catalysed reaction is a 2-methoxy-6-(all-trans-polyprenyl)benzene-1,4-diol + S-adenosyl-L-methionine = a 5-methoxy-2-methyl-3-(all-trans-polyprenyl)benzene-1,4-diol + S-adenosyl-L-homocysteine + H(+). It participates in quinol/quinone metabolism; menaquinone biosynthesis; menaquinol from 1,4-dihydroxy-2-naphthoate: step 2/2. It functions in the pathway cofactor biosynthesis; ubiquinone biosynthesis. In terms of biological role, methyltransferase required for the conversion of demethylmenaquinol (DMKH2) to menaquinol (MKH2) and the conversion of 2-polyprenyl-6-methoxy-1,4-benzoquinol (DDMQH2) to 2-polyprenyl-3-methyl-6-methoxy-1,4-benzoquinol (DMQH2). This is Ubiquinone/menaquinone biosynthesis C-methyltransferase UbiE from Rhizobium etli (strain ATCC 51251 / DSM 11541 / JCM 21823 / NBRC 15573 / CFN 42).